Here is a 251-residue protein sequence, read N- to C-terminus: Enolase-phosphatase E1 (251 aa).

Positions 13 and 15 each coordinate Mg(2+). Residues 137-138 (SS) and Lys183 contribute to the substrate site. A Mg(2+)-binding site is contributed by Asp210.

It belongs to the HAD-like hydrolase superfamily. MasA/MtnC family. In terms of assembly, monomer. Mg(2+) serves as cofactor.

It localises to the cytoplasm. The protein resides in the nucleus. The catalysed reaction is 5-methylsulfanyl-2,3-dioxopentyl phosphate + H2O = 1,2-dihydroxy-5-(methylsulfanyl)pent-1-en-3-one + phosphate. Its pathway is amino-acid biosynthesis; L-methionine biosynthesis via salvage pathway; L-methionine from S-methyl-5-thio-alpha-D-ribose 1-phosphate: step 3/6. It participates in amino-acid biosynthesis; L-methionine biosynthesis via salvage pathway; L-methionine from S-methyl-5-thio-alpha-D-ribose 1-phosphate: step 4/6. Functionally, bifunctional enzyme that catalyzes the enolization of 2,3-diketo-5-methylthiopentyl-1-phosphate (DK-MTP-1-P) into the intermediate 2-hydroxy-3-keto-5-methylthiopentenyl-1-phosphate (HK-MTPenyl-1-P), which is then dephosphorylated to form the acireductone 1,2-dihydroxy-3-keto-5-methylthiopentene (DHK-MTPene). This Candida glabrata (strain ATCC 2001 / BCRC 20586 / JCM 3761 / NBRC 0622 / NRRL Y-65 / CBS 138) (Yeast) protein is Enolase-phosphatase E1.